The chain runs to 422 residues: CinA-like protein (422 aa).

Belongs to the CinA family.

This chain is CinA-like protein, found in Mycolicibacterium gilvum (strain PYR-GCK) (Mycobacterium gilvum (strain PYR-GCK)).